Consider the following 209-residue polypeptide: Uracil phosphoribosyltransferase (209 aa).

Residues arginine 79, arginine 104, and 131–139 (DPMLATGGS) contribute to the 5-phospho-alpha-D-ribose 1-diphosphate site. Residues isoleucine 194 and 199–201 (GDA) contribute to the uracil site. Residue aspartate 200 participates in 5-phospho-alpha-D-ribose 1-diphosphate binding.

This sequence belongs to the UPRTase family. Requires Mg(2+) as cofactor.

The catalysed reaction is UMP + diphosphate = 5-phospho-alpha-D-ribose 1-diphosphate + uracil. The protein operates within pyrimidine metabolism; UMP biosynthesis via salvage pathway; UMP from uracil: step 1/1. Allosterically activated by GTP. Functionally, catalyzes the conversion of uracil and 5-phospho-alpha-D-ribose 1-diphosphate (PRPP) to UMP and diphosphate. This chain is Uracil phosphoribosyltransferase, found in Enterococcus faecalis (strain ATCC 700802 / V583).